The chain runs to 129 residues: Aspartate 1-decarboxylase (129 aa).

The active-site Schiff-base intermediate with substrate; via pyruvic acid is the Ser-25. Position 25 is a pyruvic acid (Ser) (Ser-25). Thr-57 is a substrate binding site. Tyr-58 serves as the catalytic Proton donor. Position 73 to 75 (73 to 75 (GAA)) interacts with substrate.

The protein belongs to the PanD family. Heterooctamer of four alpha and four beta subunits. Pyruvate is required as a cofactor. Is synthesized initially as an inactive proenzyme, which is activated by self-cleavage at a specific serine bond to produce a beta-subunit with a hydroxyl group at its C-terminus and an alpha-subunit with a pyruvoyl group at its N-terminus.

It is found in the cytoplasm. The catalysed reaction is L-aspartate + H(+) = beta-alanine + CO2. Its pathway is cofactor biosynthesis; (R)-pantothenate biosynthesis; beta-alanine from L-aspartate: step 1/1. In terms of biological role, catalyzes the pyruvoyl-dependent decarboxylation of aspartate to produce beta-alanine. This chain is Aspartate 1-decarboxylase, found in Chlorobium chlorochromatii (strain CaD3).